Reading from the N-terminus, the 399-residue chain is Acetate kinase (399 aa).

Mg(2+) is bound at residue asparagine 7. Lysine 14 provides a ligand contact to ATP. Position 90 (arginine 90) interacts with substrate. Catalysis depends on aspartate 147, which acts as the Proton donor/acceptor. Residues 207–211 (HLGNG), 282–284 (DFR), and 330–334 (GIGEN) contribute to the ATP site. Residue glutamate 385 participates in Mg(2+) binding.

It belongs to the acetokinase family. Homodimer. Mg(2+) serves as cofactor. It depends on Mn(2+) as a cofactor.

Its subcellular location is the cytoplasm. The catalysed reaction is acetate + ATP = acetyl phosphate + ADP. It functions in the pathway metabolic intermediate biosynthesis; acetyl-CoA biosynthesis; acetyl-CoA from acetate: step 1/2. Functionally, catalyzes the formation of acetyl phosphate from acetate and ATP. Can also catalyze the reverse reaction. This is Acetate kinase from Caldicellulosiruptor saccharolyticus (strain ATCC 43494 / DSM 8903 / Tp8T 6331).